The following is a 240-amino-acid chain: Ribose-5-phosphate isomerase A (240 aa).

Residues 1–23 (MKTSGGSDAAKRRAGESAAETVT) are disordered. Residues 32-35 (TGST), 92-95 (DGAD), and 111-114 (KGGG) each bind substrate. The Proton acceptor role is filled by E120. K138 lines the substrate pocket.

Belongs to the ribose 5-phosphate isomerase family. Homodimer.

The enzyme catalyses aldehydo-D-ribose 5-phosphate = D-ribulose 5-phosphate. Its pathway is carbohydrate degradation; pentose phosphate pathway; D-ribose 5-phosphate from D-ribulose 5-phosphate (non-oxidative stage): step 1/1. Its function is as follows. Catalyzes the reversible conversion of ribose-5-phosphate to ribulose 5-phosphate. This chain is Ribose-5-phosphate isomerase A, found in Halorubrum lacusprofundi (strain ATCC 49239 / DSM 5036 / JCM 8891 / ACAM 34).